Consider the following 427-residue polypeptide: Gamma-glutamyl phosphate reductase (427 aa).

This sequence belongs to the gamma-glutamyl phosphate reductase family.

The protein resides in the cytoplasm. The catalysed reaction is L-glutamate 5-semialdehyde + phosphate + NADP(+) = L-glutamyl 5-phosphate + NADPH + H(+). Its pathway is amino-acid biosynthesis; L-proline biosynthesis; L-glutamate 5-semialdehyde from L-glutamate: step 2/2. In terms of biological role, catalyzes the NADPH-dependent reduction of L-glutamate 5-phosphate into L-glutamate 5-semialdehyde and phosphate. The product spontaneously undergoes cyclization to form 1-pyrroline-5-carboxylate. The sequence is that of Gamma-glutamyl phosphate reductase from Sinorhizobium medicae (strain WSM419) (Ensifer medicae).